The sequence spans 295 residues: uncharacterized protein (295 aa).

Residues 2-226 enclose the ABC transporter domain; sequence LSIESLCKSY…QQTNVFTLSV (225 aa). 34 to 41 is a binding site for ATP; the sequence is GPNGAGKT.

This sequence belongs to the ABC transporter superfamily.

This is an uncharacterized protein from Bacillus subtilis (strain 168).